We begin with the raw amino-acid sequence, 409 residues long: Cobalt-precorrin-5B C(1)-methyltransferase (409 aa).

The protein belongs to the CbiD family.

It catalyses the reaction Co-precorrin-5B + S-adenosyl-L-methionine = Co-precorrin-6A + S-adenosyl-L-homocysteine. The protein operates within cofactor biosynthesis; adenosylcobalamin biosynthesis; cob(II)yrinate a,c-diamide from sirohydrochlorin (anaerobic route): step 6/10. Functionally, catalyzes the methylation of C-1 in cobalt-precorrin-5B to form cobalt-precorrin-6A. In Methanopyrus kandleri (strain AV19 / DSM 6324 / JCM 9639 / NBRC 100938), this protein is Cobalt-precorrin-5B C(1)-methyltransferase.